Reading from the N-terminus, the 253-residue chain is Ubiquinone biosynthesis O-methyltransferase (253 aa).

Positions 47, 78, 99, and 141 each coordinate S-adenosyl-L-methionine.

This sequence belongs to the methyltransferase superfamily. UbiG/COQ3 family.

It catalyses the reaction a 3-demethylubiquinol + S-adenosyl-L-methionine = a ubiquinol + S-adenosyl-L-homocysteine + H(+). The catalysed reaction is a 3-(all-trans-polyprenyl)benzene-1,2-diol + S-adenosyl-L-methionine = a 2-methoxy-6-(all-trans-polyprenyl)phenol + S-adenosyl-L-homocysteine + H(+). The protein operates within cofactor biosynthesis; ubiquinone biosynthesis. O-methyltransferase that catalyzes the 2 O-methylation steps in the ubiquinone biosynthetic pathway. This Bradyrhizobium sp. (strain ORS 278) protein is Ubiquinone biosynthesis O-methyltransferase.